Consider the following 170-residue polypeptide: Crossover junction endodeoxyribonuclease RuvC (170 aa).

Residues Asp-9, Glu-70, and Asp-145 contribute to the active site. Residues Asp-9, Glu-70, and Asp-145 each contribute to the Mg(2+) site.

It belongs to the RuvC family. Homodimer which binds Holliday junction (HJ) DNA. The HJ becomes 2-fold symmetrical on binding to RuvC with unstacked arms; it has a different conformation from HJ DNA in complex with RuvA. In the full resolvosome a probable DNA-RuvA(4)-RuvB(12)-RuvC(2) complex forms which resolves the HJ. The cofactor is Mg(2+).

The protein resides in the cytoplasm. The catalysed reaction is Endonucleolytic cleavage at a junction such as a reciprocal single-stranded crossover between two homologous DNA duplexes (Holliday junction).. Functionally, the RuvA-RuvB-RuvC complex processes Holliday junction (HJ) DNA during genetic recombination and DNA repair. Endonuclease that resolves HJ intermediates. Cleaves cruciform DNA by making single-stranded nicks across the HJ at symmetrical positions within the homologous arms, yielding a 5'-phosphate and a 3'-hydroxyl group; requires a central core of homology in the junction. The consensus cleavage sequence is 5'-(A/T)TT(C/G)-3'. Cleavage occurs on the 3'-side of the TT dinucleotide at the point of strand exchange. HJ branch migration catalyzed by RuvA-RuvB allows RuvC to scan DNA until it finds its consensus sequence, where it cleaves and resolves the cruciform DNA. In Chlamydia trachomatis serovar L2 (strain ATCC VR-902B / DSM 19102 / 434/Bu), this protein is Crossover junction endodeoxyribonuclease RuvC.